The following is a 165-amino-acid chain: LIM domain transcription factor LMO4 (165 aa).

LIM zinc-binding domains are found at residues 23 to 83 (CAGC…LFGN) and 87 to 147 (CSAC…ALIN).

As to quaternary structure, interacts strongly with LDBS. Interacts with LDB2 and LDB1. Interaction with complexes consisting of at least LDB1 and LHX3 acts to disassemble the complex; may preferentially disassemble LDB1-LHX3 complexes rather than complexes consisting of LDB1, LHX3 and ISL1. Interacts (via the LIM zinc-binding domain 1) with RBBP8. Interacts with both RPPB8 and LDB1 through the same face and cannot bind to both proteins simultaneously. Interacts with BRCA1 (via the BRCT domains); the interaction represses BRCA1 transcriptional activity. Interacts with DEAF1; LMO4 blocks export from nucleus.

In terms of biological role, transcription cofactor. Plays a role in establishing motor neuron identity, in concert with MNX1, acting, at least in part, to disrupt LDB1-LHX3 complexes thereby negatively modulating interneuron genes in motor neurons. In Bos taurus (Bovine), this protein is LIM domain transcription factor LMO4 (LMO4).